The primary structure comprises 324 residues: ATP synthase subunit a 2 (324 aa).

Residues 1–33 form the signal peptide; sequence MKRVNVFRSGVFSRLFALLLPFLLGINGLVYAS. A run of 6 helical transmembrane segments spans residues 95–115, 157–177, 179–199, 224–244, 257–277, and 291–311; these read HVVM…LVGN, LPYL…GLVP, GATA…TFFI, ALWI…PFAL, IVIL…VAMF, and IFVA…FIGL.

Belongs to the ATPase A chain family. In terms of assembly, F-type ATPases have 2 components, CF(1) - the catalytic core - and CF(0) - the membrane proton channel. CF(1) has five subunits: alpha(3), beta(3), gamma(1), delta(1), epsilon(1). CF(0) has four main subunits: a, b, b' and c.

The protein localises to the cell inner membrane. Key component of the proton channel; it plays a direct role in the translocation of protons across the membrane. This chain is ATP synthase subunit a 2, found in Prosthecochloris aestuarii (strain DSM 271 / SK 413).